A 90-amino-acid polypeptide reads, in one-letter code: Putative beta-neurotoxin RjAa14F (90 aa).

Positions 1–18 (MKILIFIIASFMLIGVEC) are cleaved as a signal peptide. In terms of domain architecture, LCN-type CS-alpha/beta spans 19–89 (KEGYPTNSEG…VWDPNNNKCV (71 aa)). 4 disulfides stabilise this stretch: Cys-29–Cys-88, Cys-33–Cys-62, Cys-40–Cys-69, and Cys-44–Cys-71.

The protein belongs to the long (4 C-C) scorpion toxin superfamily. Sodium channel inhibitor family. Beta subfamily. As to expression, expressed by the venom gland.

It is found in the secreted. Functionally, beta toxins bind voltage-independently at site-4 of sodium channels (Nav) and shift the voltage of activation toward more negative potentials thereby affecting sodium channel activation and promoting spontaneous and repetitive firing. This is Putative beta-neurotoxin RjAa14F from Rhopalurus junceus (Caribbean blue scorpion).